Reading from the N-terminus, the 404-residue chain is uncharacterized protein (404 aa).

Disordered regions lie at residues 261–307 and 320–340; these read VSTG…SPSL and KKSHSANDSEEFFREDDGGAD. Phosphoserine occurs at positions 267, 276, and 279. Phosphothreonine occurs at positions 290 and 293. Phosphoserine occurs at positions 304, 306, 324, 358, and 362. A compositionally biased stretch (basic and acidic residues) spans 320-336; the sequence is KKSHSANDSEEFFREDD.

This is an uncharacterized protein from Homo sapiens (Human).